The chain runs to 24 residues: U4-ctenitoxin-Co1b (24 aa).

Post-translationally, disulfide bonds are present. In terms of tissue distribution, expressed by the venom gland.

Its subcellular location is the secreted. In terms of biological role, omega-agatoxins are antagonists of voltage-gated calcium channels (Cav). This Ctenus ornatus (Brazilian spider) protein is U4-ctenitoxin-Co1b.